The chain runs to 425 residues: Serine--tRNA ligase (425 aa).

228–230 (TAE) serves as a coordination point for L-serine. ATP is bound at residue 259 to 261 (RSE). Residue Glu-282 participates in L-serine binding. An ATP-binding site is contributed by 346–349 (EIAS). Ser-382 serves as a coordination point for L-serine.

This sequence belongs to the class-II aminoacyl-tRNA synthetase family. Type-1 seryl-tRNA synthetase subfamily. In terms of assembly, homodimer. The tRNA molecule binds across the dimer.

The protein resides in the cytoplasm. It carries out the reaction tRNA(Ser) + L-serine + ATP = L-seryl-tRNA(Ser) + AMP + diphosphate + H(+). The catalysed reaction is tRNA(Sec) + L-serine + ATP = L-seryl-tRNA(Sec) + AMP + diphosphate + H(+). Its pathway is aminoacyl-tRNA biosynthesis; selenocysteinyl-tRNA(Sec) biosynthesis; L-seryl-tRNA(Sec) from L-serine and tRNA(Sec): step 1/1. Catalyzes the attachment of serine to tRNA(Ser). Is also able to aminoacylate tRNA(Sec) with serine, to form the misacylated tRNA L-seryl-tRNA(Sec), which will be further converted into selenocysteinyl-tRNA(Sec). The polypeptide is Serine--tRNA ligase (Rickettsia felis (strain ATCC VR-1525 / URRWXCal2) (Rickettsia azadi)).